Reading from the N-terminus, the 247-residue chain is UPF0309 protein Teth39_1980 (247 aa).

An SIS domain is found at 31–213 (IANSLLKEED…EAEIVFIMIK (183 aa)).

The protein belongs to the UPF0309 family.

In Thermoanaerobacter pseudethanolicus (strain ATCC 33223 / 39E) (Clostridium thermohydrosulfuricum), this protein is UPF0309 protein Teth39_1980.